A 274-amino-acid polypeptide reads, in one-letter code: Undecaprenyl-diphosphatase 1 (274 aa).

A run of 8 helical transmembrane segments spans residues 7-27 (LEIFKAVILGIVQGITEWLPV), 48-68 (FISTFLVVIQFGSILAVLVIF), 88-108 (VRLWLKVIIAVIPSGVIGILF), 115-135 (LFFNSTVVAIALIVYGIIMIG), 151-171 (VTYKLALCIGLFQCLALIPGT), 189-209 (YVAAEFSFFLAIPTMLGASAL), 221-241 (FEWLILGVGSVVAFVVSIVVI), and 253-273 (FKVFGYYRIVLGIVVLAYFFL).

It belongs to the UppP family.

The protein localises to the cell membrane. The enzyme catalyses di-trans,octa-cis-undecaprenyl diphosphate + H2O = di-trans,octa-cis-undecaprenyl phosphate + phosphate + H(+). Catalyzes the dephosphorylation of undecaprenyl diphosphate (UPP). Confers resistance to bacitracin. This is Undecaprenyl-diphosphatase 1 from Clostridioides difficile (strain 630) (Peptoclostridium difficile).